A 173-amino-acid chain; its full sequence is MTKDETLLVFTLVVSSVSIFLFGILLFMVLISATRDFRERTKSKLVKIMIWAGIVVITFAIAVRIYPIFIFLLKERIKPLVEALYDKLPWIWEVSLSRYWDRLIDFLDRYLWACAQRIQTGIRKQKGEFVVTFSCRVKKRLYARAIEVGIHLSLLSNLFWILKTTLAVGYRLL.

This sequence belongs to the ycf73 family.

It localises to the plastid. The protein resides in the chloroplast. This is an uncharacterized protein from Saccharum hybrid (Sugarcane).